We begin with the raw amino-acid sequence, 432 residues long: Adenylosuccinate synthetase (432 aa).

Residues 11–17 and 39–41 each bind GTP; these read GDEGKGK and GHT. The active-site Proton acceptor is Asp-12. Mg(2+) is bound by residues Asp-12 and Gly-39. IMP is bound by residues 12 to 15, 37 to 40, Thr-134, Arg-148, Asn-230, Thr-245, and Arg-309; these read DEGK and NAGH. The Proton donor role is filled by His-40. 305–311 provides a ligand contact to substrate; it reads VTTGRKR. GTP is bound by residues Arg-311, 337 to 339, and 419 to 421; these read KLD and GTG.

This sequence belongs to the adenylosuccinate synthetase family. As to quaternary structure, homodimer. Mg(2+) is required as a cofactor.

It localises to the cytoplasm. It catalyses the reaction IMP + L-aspartate + GTP = N(6)-(1,2-dicarboxyethyl)-AMP + GDP + phosphate + 2 H(+). It functions in the pathway purine metabolism; AMP biosynthesis via de novo pathway; AMP from IMP: step 1/2. Functionally, plays an important role in the de novo pathway and in the salvage pathway of purine nucleotide biosynthesis. Catalyzes the first committed step in the biosynthesis of AMP from IMP. In Vanderwaltozyma polyspora (strain ATCC 22028 / DSM 70294 / BCRC 21397 / CBS 2163 / NBRC 10782 / NRRL Y-8283 / UCD 57-17) (Kluyveromyces polysporus), this protein is Adenylosuccinate synthetase.